Here is a 544-residue protein sequence, read N- to C-terminus: uncharacterized protein (544 aa).

Transmembrane regions (helical) follow at residues 31 to 51 (ILVFYLLFFLTDVAGIPAALA), 52 to 72 (GSVLMIGKIFDAINDPIIGLL), 84 to 104 (LPWMLGGMIPFALFYTAQWLI), 116 to 136 (WGLFIYYVAIAMAFNLCYTTV), 162 to 182 (FAFSIGGSILSLILYILIAAG), 191 to 211 (FGELGVMISVLSISALLWSAL), 230 to 250 (LAPLLMAAGITLILLAIAKSF), 257 to 277 (GFDYISFFLILLGLIWGGFGF), 318 to 338 (FLFVIGIYLCSWLAVQLTASI), 356 to 376 (TIALAVQGTALVMLFVWQALA), 383 to 403 (VIYFLGSMVWMGAEAGLWLVQ), 407 to 427 (VALLYTLAIFAGVGVSVAYLI), 450 to 470 (FFYAFMVLLQKVGLALGLFLV), and 501 to 521 (FAVAPLPAFFLLGGLILAIFY).

It belongs to the sodium:galactoside symporter (TC 2.A.2) family.

It is found in the cell membrane. This is an uncharacterized protein from Synechocystis sp. (strain ATCC 27184 / PCC 6803 / Kazusa).